Reading from the N-terminus, the 138-residue chain is 1,4-dihydroxy-2-naphthoyl-CoA hydrolase (138 aa).

Asp-14 is a catalytic residue.

The protein belongs to the 4-hydroxybenzoyl-CoA thioesterase family. DHNA-CoA hydrolase subfamily.

It catalyses the reaction 1,4-dihydroxy-2-naphthoyl-CoA + H2O = 1,4-dihydroxy-2-naphthoate + CoA + H(+). Its pathway is cofactor biosynthesis; phylloquinone biosynthesis. The protein operates within quinol/quinone metabolism; 1,4-dihydroxy-2-naphthoate biosynthesis; 1,4-dihydroxy-2-naphthoate from chorismate: step 7/7. Catalyzes the hydrolysis of 1,4-dihydroxy-2-naphthoyl-CoA (DHNA-CoA) to 1,4-dihydroxy-2-naphthoate (DHNA), a reaction involved in phylloquinone (vitamin K1) biosynthesis. The protein is 1,4-dihydroxy-2-naphthoyl-CoA hydrolase of Rippkaea orientalis (strain PCC 8801 / RF-1) (Cyanothece sp. (strain PCC 8801)).